Reading from the N-terminus, the 173-residue chain is Crossover junction endodeoxyribonuclease RuvC (173 aa).

Active-site residues include D8, E67, and D139. Mg(2+) contacts are provided by D8, E67, and D139.

It belongs to the RuvC family. In terms of assembly, homodimer which binds Holliday junction (HJ) DNA. The HJ becomes 2-fold symmetrical on binding to RuvC with unstacked arms; it has a different conformation from HJ DNA in complex with RuvA. In the full resolvosome a probable DNA-RuvA(4)-RuvB(12)-RuvC(2) complex forms which resolves the HJ. The cofactor is Mg(2+).

Its subcellular location is the cytoplasm. It carries out the reaction Endonucleolytic cleavage at a junction such as a reciprocal single-stranded crossover between two homologous DNA duplexes (Holliday junction).. Functionally, the RuvA-RuvB-RuvC complex processes Holliday junction (HJ) DNA during genetic recombination and DNA repair. Endonuclease that resolves HJ intermediates. Cleaves cruciform DNA by making single-stranded nicks across the HJ at symmetrical positions within the homologous arms, yielding a 5'-phosphate and a 3'-hydroxyl group; requires a central core of homology in the junction. The consensus cleavage sequence is 5'-(A/T)TT(C/G)-3'. Cleavage occurs on the 3'-side of the TT dinucleotide at the point of strand exchange. HJ branch migration catalyzed by RuvA-RuvB allows RuvC to scan DNA until it finds its consensus sequence, where it cleaves and resolves the cruciform DNA. The chain is Crossover junction endodeoxyribonuclease RuvC from Yersinia pseudotuberculosis serotype O:1b (strain IP 31758).